The following is a 165-amino-acid chain: Minor capsid protein VP2 (165 aa).

The protein belongs to the sapovirus VP2 family. In terms of assembly, homooligomer. The portal-like structure consists in 12 copies of VP2. Interacts with capsid protein VP1.

Its subcellular location is the virion. It is found in the host cytoplasm. Its function is as follows. Minor structural protein that forms a portal-like structure at a unique three-fold axis of symmetry, following binding to the host receptor. The channel formed by VP2 may allow the delivery of the viral genome through the host endosomal membrane. In Homo sapiens (Human), this protein is Minor capsid protein VP2.